A 137-amino-acid polypeptide reads, in one-letter code: Peptide methionine sulfoxide reductase MsrB (137 aa).

Residues 7–129 (AEELKKNLSE…NSASLRFTDG (123 aa)) form the MsrB domain. Zn(2+) is bound by residues C46, C49, C95, and C98. Residue C118 is the Nucleophile of the active site.

Belongs to the MsrB Met sulfoxide reductase family. Zn(2+) is required as a cofactor.

The enzyme catalyses L-methionyl-[protein] + [thioredoxin]-disulfide + H2O = L-methionyl-(R)-S-oxide-[protein] + [thioredoxin]-dithiol. In Escherichia coli (strain K12 / MC4100 / BW2952), this protein is Peptide methionine sulfoxide reductase MsrB.